We begin with the raw amino-acid sequence, 179 residues long: Shikimate kinase (179 aa).

Residue 14–19 participates in ATP binding; that stretch reads GAGKTT. A Mg(2+)-binding site is contributed by Thr-18. Substrate-binding residues include Asp-36, Arg-60, and Gly-82. Arg-120 is a binding site for ATP. Arg-139 contributes to the substrate binding site.

The protein belongs to the shikimate kinase family. As to quaternary structure, monomer. Mg(2+) is required as a cofactor.

It is found in the cytoplasm. It catalyses the reaction shikimate + ATP = 3-phosphoshikimate + ADP + H(+). Its pathway is metabolic intermediate biosynthesis; chorismate biosynthesis; chorismate from D-erythrose 4-phosphate and phosphoenolpyruvate: step 5/7. In terms of biological role, catalyzes the specific phosphorylation of the 3-hydroxyl group of shikimic acid using ATP as a cosubstrate. This Methylococcus capsulatus (strain ATCC 33009 / NCIMB 11132 / Bath) protein is Shikimate kinase.